Consider the following 1013-residue polypeptide: Ephrin type-B receptor 6 (1013 aa).

An N-terminal signal peptide occupies residues 1-31 (MASENTAGSGSRVAGMVYSLWLLVLGPSVLA). The Extracellular portion of the chain corresponds to 32 to 590 (LEEVLLDTTG…LPEKLSLVIG (559 aa)). Residues 33-231 (EEVLLDTTGE…FSYTCPSVLR (199 aa)) enclose the Eph LBD domain. 2 consecutive Fibronectin type-III domains span residues 363–478 (PPSA…TSHE) and 479–574 (VPSA…TLPQ). Asn-472 carries an N-linked (GlcNAc...) asparagine glycan. A helical membrane pass occupies residues 591-611 (SILGALAFLLLAAITVLAVIF). At 612–1013 (QRKRRGTGYT…HLRQPGSVEV (402 aa)) the chain is on the cytoplasmic side. Residues 662–911 (IKIEEVIGAG…QLVAAFDKMI (250 aa)) enclose the Protein kinase domain. 668–676 (IGAGSFGEV) is a binding site for ATP. The region spanning 940-1004 (PCLDSPQAWL…LHNIQLLQQH (65 aa)) is the SAM domain. The PDZ-binding motif lies at 1011 to 1013 (VEV).

This sequence belongs to the protein kinase superfamily. Tyr protein kinase family. Ephrin receptor subfamily. Interacts with CBL and EPHB1. Interacts with FYN; this interaction takes place in a ligand-independent manner. In terms of processing, ligand-binding increases phosphorylation on tyrosine residues. Phosphorylation on tyrosine residues is mediated by transphosphorylation by the catalytically active EPHB1 in a ligand-independent manner. Tyrosine phosphorylation of the receptor may act as a switch on the functional transition from cell adhesion/attraction to de-adhesion/repulsion.

It is found in the membrane. Kinase-defective receptor for members of the ephrin-B family. Binds to ephrin-B1 and ephrin-B2. Modulates cell adhesion and migration by exerting both positive and negative effects upon stimulation with ephrin-B2. Inhibits JNK activation, T-cell receptor-induced IL-2 secretion and CD25 expression upon stimulation with ephrin-B2. In Rattus norvegicus (Rat), this protein is Ephrin type-B receptor 6 (Ephb6).